The following is a 344-amino-acid chain: Leucine-rich repeat-containing protein 75A (344 aa).

A disordered region spans residues 1–25 (MGTRQTKGSLAERASPGAAPGPRRE). Over residues 11-21 (AERASPGAAPG) the composition is skewed to low complexity. LRR repeat units lie at residues 204-217 (VDSV…LTDD) and 229-242 (LPRL…GNRL). Residues 295 to 344 (LPTILELGEGPGSGEEVREGTVGQEDPGGGPVAPAEDHHEGKETVAAAQT) form a disordered region.

Belongs to the LRRC75 family.

The chain is Leucine-rich repeat-containing protein 75A (LRRC75A) from Homo sapiens (Human).